Reading from the N-terminus, the 381-residue chain is Choline transport ATP-binding protein OpuBA (381 aa).

Residues Leu2–Ile236 form the ABC transporter domain. Gly35–Thr42 is an ATP binding site. CBS domains lie at Met256–Glu314 and Leu316–Glu374.

The protein belongs to the ABC transporter superfamily.

Its function is as follows. Involved in a high affinity multicomponent binding-protein-dependent transport system for choline. Probably responsible for energy coupling to the transport system. The sequence is that of Choline transport ATP-binding protein OpuBA (opuBA) from Bacillus subtilis (strain 168).